The following is a 194-amino-acid chain: Small ribosomal subunit protein uS4 (194 aa).

An N6-acetyllysine modification is found at K66. K93 is covalently cross-linked (Glycyl lysine isopeptide (Lys-Gly) (interchain with G-Cter in SUMO2)). In terms of domain architecture, S4 RNA-binding spans 108–182 (RRLQTQVFKL…VKRKNAKKGQ (75 aa)). K116 is modified (N6-acetyllysine). A Glycyl lysine isopeptide (Lys-Gly) (interchain with G-Cter in SUMO2) cross-link involves residue K139. S153 is modified (phosphoserine). K155 is subject to N6-acetyllysine. A disordered region spans residues 162-194 (RSPYGGGRPGRVKRKNAKKGQGGAGAGDDEEED). The residue at position 163 (S163) is a Phosphoserine.

This sequence belongs to the universal ribosomal protein uS4 family. Component of the small ribosomal subunit. Part of the small subunit (SSU) processome, composed of more than 70 proteins and the RNA chaperone small nucleolar RNA (snoRNA) U3.

The protein localises to the cytoplasm. It is found in the nucleus. The protein resides in the nucleolus. Functionally, component of the small ribosomal subunit. The ribosome is a large ribonucleoprotein complex responsible for the synthesis of proteins in the cell. Part of the small subunit (SSU) processome, first precursor of the small eukaryotic ribosomal subunit. During the assembly of the SSU processome in the nucleolus, many ribosome biogenesis factors, an RNA chaperone and ribosomal proteins associate with the nascent pre-rRNA and work in concert to generate RNA folding, modifications, rearrangements and cleavage as well as targeted degradation of pre-ribosomal RNA by the RNA exosome. The sequence is that of Small ribosomal subunit protein uS4 (RPS9) from Papio anubis (Olive baboon).